The primary structure comprises 211 residues: tRNA (guanine-N(7)-)-methyltransferase (211 aa).

4 residues coordinate S-adenosyl-L-methionine: glutamate 44, aspartate 69, aspartate 96, and aspartate 118. Aspartate 118 is a catalytic residue. Residue lysine 122 coordinates substrate. Residues 124–129 (RHEKRR) are interaction with RNA. Substrate contacts are provided by residues aspartate 154 and 191-194 (TEYE).

Belongs to the class I-like SAM-binding methyltransferase superfamily. TrmB family.

It catalyses the reaction guanosine(46) in tRNA + S-adenosyl-L-methionine = N(7)-methylguanosine(46) in tRNA + S-adenosyl-L-homocysteine. It participates in tRNA modification; N(7)-methylguanine-tRNA biosynthesis. Its function is as follows. Catalyzes the formation of N(7)-methylguanine at position 46 (m7G46) in tRNA. This is tRNA (guanine-N(7)-)-methyltransferase from Streptococcus pneumoniae (strain Taiwan19F-14).